The primary structure comprises 461 residues: Bifunctional protein GlmU (461 aa).

Residues 1–235 (MKAIILAAGL…ITEIFGVNDR (235 aa)) are pyrophosphorylase. UDP-N-acetyl-alpha-D-glucosamine is bound by residues 6 to 9 (LAAG), Lys-20, Gln-71, and 77 to 78 (GT). Asp-102 provides a ligand contact to Mg(2+). UDP-N-acetyl-alpha-D-glucosamine-binding residues include Gly-145, Glu-160, Asn-175, and Asn-233. Residue Asn-233 coordinates Mg(2+). The interval 236 to 256 (WELSFAESVIKMRILENLARS) is linker. Residues 257 to 461 (GVTIHSPESV…LEDKSKVKDE (205 aa)) form an N-acetyltransferase region. UDP-N-acetyl-alpha-D-glucosamine is bound by residues Arg-339 and Lys-357. The Proton acceptor role is filled by His-369. Positions 372 and 383 each coordinate UDP-N-acetyl-alpha-D-glucosamine. Residues Ala-386, Ser-411, Gly-429, and Arg-446 each coordinate acetyl-CoA.

This sequence in the N-terminal section; belongs to the N-acetylglucosamine-1-phosphate uridyltransferase family. In the C-terminal section; belongs to the transferase hexapeptide repeat family. Homotrimer. It depends on Mg(2+) as a cofactor.

It is found in the cytoplasm. It catalyses the reaction alpha-D-glucosamine 1-phosphate + acetyl-CoA = N-acetyl-alpha-D-glucosamine 1-phosphate + CoA + H(+). The enzyme catalyses N-acetyl-alpha-D-glucosamine 1-phosphate + UTP + H(+) = UDP-N-acetyl-alpha-D-glucosamine + diphosphate. It functions in the pathway nucleotide-sugar biosynthesis; UDP-N-acetyl-alpha-D-glucosamine biosynthesis; N-acetyl-alpha-D-glucosamine 1-phosphate from alpha-D-glucosamine 6-phosphate (route II): step 2/2. It participates in nucleotide-sugar biosynthesis; UDP-N-acetyl-alpha-D-glucosamine biosynthesis; UDP-N-acetyl-alpha-D-glucosamine from N-acetyl-alpha-D-glucosamine 1-phosphate: step 1/1. Its pathway is bacterial outer membrane biogenesis; LPS lipid A biosynthesis. Catalyzes the last two sequential reactions in the de novo biosynthetic pathway for UDP-N-acetylglucosamine (UDP-GlcNAc). The C-terminal domain catalyzes the transfer of acetyl group from acetyl coenzyme A to glucosamine-1-phosphate (GlcN-1-P) to produce N-acetylglucosamine-1-phosphate (GlcNAc-1-P), which is converted into UDP-GlcNAc by the transfer of uridine 5-monophosphate (from uridine 5-triphosphate), a reaction catalyzed by the N-terminal domain. This is Bifunctional protein GlmU from Hydrogenobaculum sp. (strain Y04AAS1).